A 293-amino-acid polypeptide reads, in one-letter code: N-acetylneuraminate lyase (293 aa).

S48 and S49 together coordinate aceneuramate. The active-site Proton donor is the Y137. Residue K165 is the Schiff-base intermediate with substrate of the active site. 5 residues coordinate aceneuramate: T167, G189, D191, E192, and S208.

Belongs to the DapA family. NanA subfamily. In terms of assembly, homotetramer.

It is found in the cytoplasm. It catalyses the reaction aceneuramate = aldehydo-N-acetyl-D-mannosamine + pyruvate. It functions in the pathway amino-sugar metabolism; N-acetylneuraminate degradation; D-fructose 6-phosphate from N-acetylneuraminate: step 1/5. Functionally, catalyzes the reversible aldol cleavage of N-acetylneuraminic acid (sialic acid; Neu5Ac) to form pyruvate and N-acetylmannosamine (ManNAc) via a Schiff base intermediate. The sequence is that of N-acetylneuraminate lyase from Staphylococcus aureus (strain MRSA252).